The primary structure comprises 510 residues: ATP-dependent zinc metalloprotease FtsH 2 (510 aa).

Residues 1–4 (MKKN) lie on the Cytoplasmic side of the membrane. A helical transmembrane segment spans residues 5–25 (LHIIILALSIFINLLFIYIFI). The Extracellular segment spans residues 26–31 (SEVKPN). The chain crosses the membrane as a helical span at residues 32–52 (LNLNLSFILTAAVIVVTYLLF). Topologically, residues 53–510 (KNKFSELMPV…LWEEENTLCV (458 aa)) are cytoplasmic. 124–131 (GPPGTGKT) is an ATP binding site. Position 343 (His-343) interacts with Zn(2+). Glu-344 is a catalytic residue. Residues His-347 and Asp-418 each contribute to the Zn(2+) site.

This sequence in the central section; belongs to the AAA ATPase family. In the C-terminal section; belongs to the peptidase M41 family. As to quaternary structure, homohexamer. It depends on Zn(2+) as a cofactor.

It localises to the cell membrane. In terms of biological role, acts as a processive, ATP-dependent zinc metallopeptidase for both cytoplasmic and membrane proteins. Plays a role in the quality control of integral membrane proteins. The sequence is that of ATP-dependent zinc metalloprotease FtsH 2 from Thermoanaerobacter sp. (strain X514).